The chain runs to 421 residues: UDP-N-acetylglucosamine 1-carboxyvinyltransferase (421 aa).

22-23 (KN) contacts phosphoenolpyruvate. Position 95 (arginine 95) interacts with UDP-N-acetyl-alpha-D-glucosamine. Cysteine 119 (proton donor) is an active-site residue. Cysteine 119 is subject to 2-(S-cysteinyl)pyruvic acid O-phosphothioketal. UDP-N-acetyl-alpha-D-glucosamine is bound by residues 124–128 (RPVDQ), aspartate 309, and isoleucine 331.

Belongs to the EPSP synthase family. MurA subfamily.

The protein resides in the cytoplasm. The catalysed reaction is phosphoenolpyruvate + UDP-N-acetyl-alpha-D-glucosamine = UDP-N-acetyl-3-O-(1-carboxyvinyl)-alpha-D-glucosamine + phosphate. It participates in cell wall biogenesis; peptidoglycan biosynthesis. In terms of biological role, cell wall formation. Adds enolpyruvyl to UDP-N-acetylglucosamine. The sequence is that of UDP-N-acetylglucosamine 1-carboxyvinyltransferase from Leptothrix cholodnii (strain ATCC 51168 / LMG 8142 / SP-6) (Leptothrix discophora (strain SP-6)).